A 156-amino-acid polypeptide reads, in one-letter code: Small ribosomal subunit protein uS7 (156 aa).

The protein belongs to the universal ribosomal protein uS7 family. As to quaternary structure, part of the 30S ribosomal subunit. Contacts proteins S9 and S11.

Functionally, one of the primary rRNA binding proteins, it binds directly to 16S rRNA where it nucleates assembly of the head domain of the 30S subunit. Is located at the subunit interface close to the decoding center, probably blocks exit of the E-site tRNA. The polypeptide is Small ribosomal subunit protein uS7 (Mycolicibacterium gilvum (strain PYR-GCK) (Mycobacterium gilvum (strain PYR-GCK))).